The following is a 330-amino-acid chain: Aspartate--ammonia ligase (330 aa).

The protein belongs to the class-II aminoacyl-tRNA synthetase family. AsnA subfamily.

It localises to the cytoplasm. The catalysed reaction is L-aspartate + NH4(+) + ATP = L-asparagine + AMP + diphosphate + H(+). The protein operates within amino-acid biosynthesis; L-asparagine biosynthesis; L-asparagine from L-aspartate (ammonia route): step 1/1. The protein is Aspartate--ammonia ligase of Shigella sonnei (strain Ss046).